The sequence spans 489 residues: MTFRNCVAVDLGASSGRVMLARYERECRSLTLREIHRFNNGLHSQNGYVTWDVDSLESAIRLGLNKVCEEGIRIDSIGIDTWGVDFVLLDQQGQRVGLPVAYRDSRTNGLMAQAQQQLGKRDIYQRSGIQFLPFNTLYQLRALTEQQPELIPHIAHALLMPDYFSYRLTGKMNWEYTNATTTQLVNINSDDWDESLLAWSGANKAWFGRPTHPGNVIGHWICPQGNEIPVVAVASHDTASAVIASPLNGSRAAYLSSGTWSLMGFESQTPFTNDTALAANITNEGGAEGRYRVLKNIMGLWLLQRVLQEQQINDLPALISATQALPACRFIINPNDDRFINPETMCSEIQAACRETAQPIPESDAELARCIFDSLALLYADVLHELAQLRGEDFSQLYIVGGGCQNTLLNQLCADACGIRVIAGPVEASTLGNIGIQLMTLDELNNVDDFRQVVSTTANLTTFTPNPDSEIAHYVARIHSTRQTKELCA.

Ala13–Arg17 is an ATP binding site. An intrachain disulfide couples Cys68 to Cys222. Substrate is bound by residues Gly83 and His236–Thr238. Catalysis depends on Asp237, which acts as the Proton acceptor. An ATP-binding site is contributed by Thr259. Asn296 provides a ligand contact to substrate. Gln304 is an ATP binding site. Cys353 and Cys370 are disulfide-bonded. Gly402 lines the ATP pocket. A disulfide bridge connects residues Cys413 and Cys417.

It belongs to the rhamnulokinase family. As to quaternary structure, monomer. Mg(2+) is required as a cofactor.

The enzyme catalyses L-rhamnulose + ATP = L-rhamnulose 1-phosphate + ADP + H(+). Its pathway is carbohydrate degradation; L-rhamnose degradation; glycerone phosphate from L-rhamnose: step 2/3. Involved in the catabolism of L-rhamnose (6-deoxy-L-mannose). Catalyzes the transfer of the gamma-phosphate group from ATP to the 1-hydroxyl group of L-rhamnulose to yield L-rhamnulose 1-phosphate. This is Rhamnulokinase from Escherichia coli O9:H4 (strain HS).